The chain runs to 166 residues: Putative peptidyl-prolyl cis-trans isomerase dodo (166 aa).

Residues 5 to 39 (EQLPDGWEKRTSRSTGMSYYLNMYTKESQWDQPTE) enclose the WW domain. Residues 32–53 (SQWDQPTEPAKKAGGGSAGGGD) form a disordered region. The segment covering 44-53 (AGGGSAGGGD) has biased composition (gly residues). Residues 55–166 (PDEVHCLHLL…SGLHIILRKA (112 aa)) form the PpiC domain.

The enzyme catalyses [protein]-peptidylproline (omega=180) = [protein]-peptidylproline (omega=0). This Drosophila melanogaster (Fruit fly) protein is Putative peptidyl-prolyl cis-trans isomerase dodo (dod).